We begin with the raw amino-acid sequence, 424 residues long: UDP-N-acetylglucosamine 1-carboxyvinyltransferase (424 aa).

A phosphoenolpyruvate-binding site is contributed by 22–23; sequence KN. Residue arginine 98 coordinates UDP-N-acetyl-alpha-D-glucosamine. Cysteine 122 functions as the Proton donor in the catalytic mechanism. Cysteine 122 is subject to 2-(S-cysteinyl)pyruvic acid O-phosphothioketal. Residues 127–131, aspartate 312, and isoleucine 334 contribute to the UDP-N-acetyl-alpha-D-glucosamine site; that span reads RPVDQ.

The protein belongs to the EPSP synthase family. MurA subfamily.

The protein localises to the cytoplasm. It catalyses the reaction phosphoenolpyruvate + UDP-N-acetyl-alpha-D-glucosamine = UDP-N-acetyl-3-O-(1-carboxyvinyl)-alpha-D-glucosamine + phosphate. It participates in cell wall biogenesis; peptidoglycan biosynthesis. Its function is as follows. Cell wall formation. Adds enolpyruvyl to UDP-N-acetylglucosamine. The chain is UDP-N-acetylglucosamine 1-carboxyvinyltransferase from Xanthomonas campestris pv. campestris (strain 8004).